The chain runs to 179 residues: Large ribosomal subunit protein uL6 (179 aa).

This sequence belongs to the universal ribosomal protein uL6 family. In terms of assembly, part of the 50S ribosomal subunit.

This protein binds to the 23S rRNA, and is important in its secondary structure. It is located near the subunit interface in the base of the L7/L12 stalk, and near the tRNA binding site of the peptidyltransferase center. This Prochlorococcus marinus (strain MIT 9312) protein is Large ribosomal subunit protein uL6.